Here is a 158-residue protein sequence, read N- to C-terminus: 6,7-dimethyl-8-ribityllumazine synthase (158 aa).

Residues Phe23, 61–63, and 85–87 contribute to the 5-amino-6-(D-ribitylamino)uracil site; these read SFE and AVI. 90 to 91 lines the (2S)-2-hydroxy-3-oxobutyl phosphate pocket; it reads ET. Residue His93 is the Proton donor of the active site. Phe118 contributes to the 5-amino-6-(D-ribitylamino)uracil binding site. Arg132 contacts (2S)-2-hydroxy-3-oxobutyl phosphate.

This sequence belongs to the DMRL synthase family.

It carries out the reaction (2S)-2-hydroxy-3-oxobutyl phosphate + 5-amino-6-(D-ribitylamino)uracil = 6,7-dimethyl-8-(1-D-ribityl)lumazine + phosphate + 2 H2O + H(+). It functions in the pathway cofactor biosynthesis; riboflavin biosynthesis; riboflavin from 2-hydroxy-3-oxobutyl phosphate and 5-amino-6-(D-ribitylamino)uracil: step 1/2. Its function is as follows. Catalyzes the formation of 6,7-dimethyl-8-ribityllumazine by condensation of 5-amino-6-(D-ribitylamino)uracil with 3,4-dihydroxy-2-butanone 4-phosphate. This is the penultimate step in the biosynthesis of riboflavin. The chain is 6,7-dimethyl-8-ribityllumazine synthase from Prochlorococcus marinus subsp. pastoris (strain CCMP1986 / NIES-2087 / MED4).